Consider the following 390-residue polypeptide: Transforming growth factor beta-1 proprotein (390 aa).

A signal peptide spans 1–29; that stretch reads MPPSRLRLLPLLLPLLWLLVLAPGRPASG. Residues 30–74 form a straightjacket domain region; the sequence is LSTCKTIDMELVKRKRIEAIRGQILSKLRLASPPSQGDVPPGPLP. The arm domain stretch occupies residues 75-271; it reads EAVLALYNST…ATPLERAQHL (197 aa). Asparagine 82, asparagine 136, and asparagine 176 each carry an N-linked (GlcNAc...) asparagine glycan. Residues 226–252 form a bowtie tail region; that stretch reads DSKDNTLRVEINGIGPKRRGDLAAIHG. Positions 244–246 match the Cell attachment site motif; sequence RGD. 4 cysteine pairs are disulfide-bonded: cysteine 285-cysteine 294, cysteine 293-cysteine 356, cysteine 322-cysteine 387, and cysteine 326-cysteine 389.

Belongs to the TGF-beta family. In terms of assembly, homodimer; disulfide-linked. Interacts with the serine proteases, HTRA1 and HTRA3: the interaction with either inhibits TGFB1-mediated signaling and the HTRA protease activity is required for this inhibition. May interact with THSD4; this interaction may lead to sequestration by FBN1 microfibril assembly and attenuation of TGFB signaling. Interacts with CD109, DPT and ASPN. Interacts with EFEMP2. Interacts with TSKU; the interaction contributes to regulation of the hair cycle. Interacts with TGFBR3. As to quaternary structure, homodimer; disulfide-linked. Interacts with transforming growth factor beta-1 (TGF-beta-1) chain; interaction is non-covalent and maintains TGF-beta-1 in a latent state; each latency-associated peptide (LAP) monomer interacts with TGF-beta-1 in the other monomer. Interacts with LTBP1; leading to regulation of TGF-beta-1 activation. Interacts with LRRC32/GARP; leading to regulation of TGF-beta-1 activation on the surface of activated regulatory T-cells (Tregs). Interacts with LRRC33/NRROS; leading to regulation of TGF-beta-1 in macrophages and microglia. Interacts (via cell attachment site) with integrins ITGAV and ITGB6 (ITGAV:ITGB6), leading to release of the active TGF-beta-1. Interacts with NREP; the interaction results in a decrease in TGFB1 autoinduction. Interacts with HSP90AB1; inhibits latent TGFB1 activation. Homodimer; disulfide-linked. Interacts with TGF-beta receptors (TGFBR1 and TGFBR2), leading to signal transduction. Transforming growth factor beta-1 proprotein: The precursor proprotein is cleaved in the Golgi apparatus by FURIN to form Transforming growth factor beta-1 (TGF-beta-1) and Latency-associated peptide (LAP) chains, which remain non-covalently linked, rendering TGF-beta-1 inactive. Post-translationally, N-glycosylated. Deglycosylation leads to activation of Transforming growth factor beta-1 (TGF-beta-1); mechanisms triggering deglycosylation-driven activation of TGF-beta-1 are however unclear.

The protein resides in the secreted. It localises to the extracellular space. The protein localises to the extracellular matrix. Its function is as follows. Transforming growth factor beta-1 proprotein: Precursor of the Latency-associated peptide (LAP) and Transforming growth factor beta-1 (TGF-beta-1) chains, which constitute the regulatory and active subunit of TGF-beta-1, respectively. Functionally, required to maintain the Transforming growth factor beta-1 (TGF-beta-1) chain in a latent state during storage in extracellular matrix. Associates non-covalently with TGF-beta-1 and regulates its activation via interaction with 'milieu molecules', such as LTBP1, LRRC32/GARP and LRRC33/NRROS, that control activation of TGF-beta-1. Interaction with LRRC33/NRROS regulates activation of TGF-beta-1 in macrophages and microglia. Interaction with LRRC32/GARP controls activation of TGF-beta-1 on the surface of activated regulatory T-cells (Tregs). Interaction with integrins (ITGAV:ITGB6 or ITGAV:ITGB8) results in distortion of the Latency-associated peptide chain and subsequent release of the active TGF-beta-1. Multifunctional protein that regulates the growth and differentiation of various cell types and is involved in various processes, such as normal development, immune function, microglia function and responses to neurodegeneration. Activation into mature form follows different steps: following cleavage of the proprotein in the Golgi apparatus, Latency-associated peptide (LAP) and Transforming growth factor beta-1 (TGF-beta-1) chains remain non-covalently linked rendering TGF-beta-1 inactive during storage in extracellular matrix. At the same time, LAP chain interacts with 'milieu molecules', such as LTBP1, LRRC32/GARP and LRRC33/NRROS that control activation of TGF-beta-1 and maintain it in a latent state during storage in extracellular milieus. TGF-beta-1 is released from LAP by integrins (ITGAV:ITGB6 or ITGAV:ITGB8): integrin-binding to LAP stabilizes an alternative conformation of the LAP bowtie tail and results in distortion of the LAP chain and subsequent release of the active TGF-beta-1. Once activated following release of LAP, TGF-beta-1 acts by binding to TGF-beta receptors (TGFBR1 and TGFBR2), which transduce signal. While expressed by many cells types, TGF-beta-1 only has a very localized range of action within cell environment thanks to fine regulation of its activation by Latency-associated peptide chain (LAP) and 'milieu molecules'. Plays an important role in bone remodeling: acts as a potent stimulator of osteoblastic bone formation, causing chemotaxis, proliferation and differentiation in committed osteoblasts. Can promote either T-helper 17 cells (Th17) or regulatory T-cells (Treg) lineage differentiation in a concentration-dependent manner. At high concentrations, leads to FOXP3-mediated suppression of RORC and down-regulation of IL-17 expression, favoring Treg cell development. At low concentrations in concert with IL-6 and IL-21, leads to expression of the IL-17 and IL-23 receptors, favoring differentiation to Th17 cells. Stimulates sustained production of collagen through the activation of CREB3L1 by regulated intramembrane proteolysis (RIP). Mediates SMAD2/3 activation by inducing its phosphorylation and subsequent translocation to the nucleus. Positively regulates odontoblastic differentiation in dental papilla cells, via promotion of IPO7-mediated translocation of phosphorylated SMAD2 to the nucleus and subsequent transcription of target genes. Can induce epithelial-to-mesenchymal transition (EMT) and cell migration in various cell types. The polypeptide is Transforming growth factor beta-1 proprotein (TGFB1) (Cavia porcellus (Guinea pig)).